The primary structure comprises 513 residues: ATP synthase subunit alpha (513 aa).

169 to 176 (GDRQIGKT) contributes to the ATP binding site.

This sequence belongs to the ATPase alpha/beta chains family. In terms of assembly, F-type ATPases have 2 components, CF(1) - the catalytic core - and CF(0) - the membrane proton channel. CF(1) has five subunits: alpha(3), beta(3), gamma(1), delta(1), epsilon(1). CF(0) has three main subunits: a(1), b(2) and c(9-12). The alpha and beta chains form an alternating ring which encloses part of the gamma chain. CF(1) is attached to CF(0) by a central stalk formed by the gamma and epsilon chains, while a peripheral stalk is formed by the delta and b chains.

It localises to the cell inner membrane. The catalysed reaction is ATP + H2O + 4 H(+)(in) = ADP + phosphate + 5 H(+)(out). Produces ATP from ADP in the presence of a proton gradient across the membrane. The alpha chain is a regulatory subunit. The protein is ATP synthase subunit alpha of Francisella philomiragia subsp. philomiragia (strain ATCC 25017 / CCUG 19701 / FSC 153 / O#319-036).